The following is a 264-amino-acid chain: tRNA pseudouridine synthase A (264 aa).

D51 (nucleophile) is an active-site residue. Position 109 (Y109) interacts with substrate.

This sequence belongs to the tRNA pseudouridine synthase TruA family. As to quaternary structure, homodimer.

It catalyses the reaction uridine(38/39/40) in tRNA = pseudouridine(38/39/40) in tRNA. Its function is as follows. Formation of pseudouridine at positions 38, 39 and 40 in the anticodon stem and loop of transfer RNAs. This chain is tRNA pseudouridine synthase A, found in Vibrio cholerae serotype O1 (strain ATCC 39541 / Classical Ogawa 395 / O395).